A 45-amino-acid polypeptide reads, in one-letter code: Photosystem II reaction center protein K (45 aa).

Positions 1–8 are excised as a propeptide; the sequence is MEAALLLA. The chain crosses the membrane as a helical span at residues 24–44; it reads LPVIPVFFLLLAFVWQAAVGF.

This sequence belongs to the PsbK family. In terms of assembly, PSII is composed of 1 copy each of membrane proteins PsbA, PsbB, PsbC, PsbD, PsbE, PsbF, PsbH, PsbI, PsbJ, PsbK, PsbL, PsbM, PsbT, PsbX, PsbY, PsbZ, Psb30/Ycf12, peripheral proteins PsbO, CyanoQ (PsbQ), PsbU, PsbV and a large number of cofactors. It forms dimeric complexes.

The protein localises to the cellular thylakoid membrane. In terms of biological role, one of the components of the core complex of photosystem II (PSII). PSII is a light-driven water:plastoquinone oxidoreductase that uses light energy to abstract electrons from H(2)O, generating O(2) and a proton gradient subsequently used for ATP formation. It consists of a core antenna complex that captures photons, and an electron transfer chain that converts photonic excitation into a charge separation. This is Photosystem II reaction center protein K from Synechococcus elongatus (strain ATCC 33912 / PCC 7942 / FACHB-805) (Anacystis nidulans R2).